The chain runs to 55 residues: Large ribosomal subunit protein bL33 (55 aa).

The protein belongs to the bacterial ribosomal protein bL33 family.

The chain is Large ribosomal subunit protein bL33 from Photorhabdus laumondii subsp. laumondii (strain DSM 15139 / CIP 105565 / TT01) (Photorhabdus luminescens subsp. laumondii).